The primary structure comprises 130 residues: Small ribosomal subunit protein uS8 (130 aa).

It belongs to the universal ribosomal protein uS8 family.

Its subcellular location is the cytoplasm. The protein is Small ribosomal subunit protein uS8 (RPS15A) of Daucus carota (Wild carrot).